The primary structure comprises 525 residues: GMP synthase [glutamine-hydrolyzing] (525 aa).

A Glutamine amidotransferase type-1 domain is found at 9 to 207 (RILILDFGSQ…VLGICGCEAL (199 aa)). Residue Cys-86 is the Nucleophile of the active site. Catalysis depends on residues His-181 and Glu-183. The GMPS ATP-PPase domain occupies 208–400 (WTSATIIEDA…LGLPYDMLYR (193 aa)). Residue 235 to 241 (SGGVDSS) coordinates ATP.

In terms of assembly, homodimer.

It catalyses the reaction XMP + L-glutamine + ATP + H2O = GMP + L-glutamate + AMP + diphosphate + 2 H(+). Its pathway is purine metabolism; GMP biosynthesis; GMP from XMP (L-Gln route): step 1/1. Its function is as follows. Catalyzes the synthesis of GMP from XMP. In Yersinia pseudotuberculosis serotype IB (strain PB1/+), this protein is GMP synthase [glutamine-hydrolyzing].